Reading from the N-terminus, the 218-residue chain is Protein Syd (218 aa).

Belongs to the Syd family.

Its subcellular location is the cell inner membrane. Its function is as follows. Interacts with the SecY protein in vivo. May bind preferentially to an uncomplexed state of SecY, thus functioning either as a chelating agent for excess SecY in the cell or as a regulatory factor that negatively controls the translocase function. The polypeptide is Protein Syd (Shewanella denitrificans (strain OS217 / ATCC BAA-1090 / DSM 15013)).